We begin with the raw amino-acid sequence, 398 residues long: Secreted aspartic protease 2 (398 aa).

The first 18 residues, 1–18, serve as a signal peptide directing secretion; it reads MFLKNIFIALAIALLVDA. The propeptide at 19–56 is activation peptide; sequence TPTTTKRSAGFVALDFSVVKTPKAFPVTNGQEGKTSKR. A Peptidase A1 domain is found at 70–384; that stretch reads YAADITVGSN…DLDDNEISLA (315 aa). The active site involves aspartate 88. 88–90 contributes to the pepstatin A binding site; it reads DTG. The cysteines at positions 103 and 115 are disulfide-linked. 141-142 is a binding site for pepstatin A; the sequence is GD. Residues aspartate 247 and aspartate 270 each contribute to the Zn(2+) site. The active site involves aspartate 274. 274–278 lines the pepstatin A pocket; sequence DSGTT. A disulfide bond links cysteine 312 and cysteine 350. Residues asparagine 313 and asparagine 321 are each glycosylated (N-linked (GlcNAc...) asparagine).

Belongs to the peptidase A1 family. As to quaternary structure, monomer.

It localises to the secreted. The catalysed reaction is Preferential cleavage at the carboxyl of hydrophobic amino acids, but fails to cleave 15-Leu-|-Tyr-16, 16-Tyr-|-Leu-17 and 24-Phe-|-Phe-25 of insulin B chain. Activates trypsinogen, and degrades keratin.. In terms of biological role, secreted aspartic peptidases (SAPs) are a group of ten acidic hydrolases considered as key virulence factors. These enzymes supply the fungus with nutrient amino acids as well as are able to degrade the selected host's proteins involved in the immune defense. Induces host inflammatory cytokine production in a proteolytic activity-independent way. Plays a role in tissue damage during superficial infection. Moreover, acts toward human hemoglobin though limited proteolysis to generate a variety of antimicrobial hemocidins, enabling to compete with the other microorganisms of the same physiological niche using the microbicidal peptides generated from the host protein. Plays a key role in defense against host by cleaving histatin-5 (Hst 5), a peptide from human saliva that carries out fungicidal activity. The cleavage rate decreases in an order of SAP2 &gt; SAP9 &gt; SAP3 &gt; SAP7 &gt; SAP4 &gt; SAP1 &gt; SAP8. The first cleavage occurs between residues 'Lys-17' and 'His-18' of Hst 5, giving DSHAKRHHGYKRKFHEK and HHSHRGY peptides. Simultaneously, the DSHAKRHHGYKRK peptide is also formed. Further fragmentation by SAP2 results in FHEK and DSHAKRHHGY products. The chain is Secreted aspartic protease 2 from Candida albicans (Yeast).